The sequence spans 347 residues: Phenylalanine--tRNA ligase alpha subunit (347 aa).

Glu262 provides a ligand contact to Mg(2+).

Belongs to the class-II aminoacyl-tRNA synthetase family. Phe-tRNA synthetase alpha subunit type 1 subfamily. Tetramer of two alpha and two beta subunits. It depends on Mg(2+) as a cofactor.

Its subcellular location is the cytoplasm. The enzyme catalyses tRNA(Phe) + L-phenylalanine + ATP = L-phenylalanyl-tRNA(Phe) + AMP + diphosphate + H(+). This chain is Phenylalanine--tRNA ligase alpha subunit, found in Roseiflexus sp. (strain RS-1).